Reading from the N-terminus, the 427-residue chain is Phosphoglucosamine mutase (427 aa).

Ser-94 serves as the catalytic Phosphoserine intermediate. Mg(2+) is bound by residues Ser-94, Asp-228, Asp-230, and Asp-232. Phosphoserine is present on Ser-94.

This sequence belongs to the phosphohexose mutase family. Mg(2+) serves as cofactor. In terms of processing, activated by phosphorylation.

It catalyses the reaction alpha-D-glucosamine 1-phosphate = D-glucosamine 6-phosphate. Its function is as follows. Catalyzes the conversion of glucosamine-6-phosphate to glucosamine-1-phosphate. The chain is Phosphoglucosamine mutase from Thermotoga sp. (strain RQ2).